The following is a 100-amino-acid chain: uncharacterized protein (100 aa).

Residue K98 forms an Isoglutamyl lysine isopeptide (Lys-Gln) (interchain with Q-Cter in protein Pup) linkage.

This is an uncharacterized protein from Mycobacterium tuberculosis (strain CDC 1551 / Oshkosh).